The primary structure comprises 602 residues: Elongation factor 4 (602 aa).

The tr-type G domain maps to 8–190 (DLIRNFSIVA…AIVHRLPPPK (183 aa)). Residues 20-25 (DHGKST) and 137-140 (NKID) each bind GTP.

It belongs to the TRAFAC class translation factor GTPase superfamily. Classic translation factor GTPase family. LepA subfamily.

The protein resides in the cell inner membrane. The catalysed reaction is GTP + H2O = GDP + phosphate + H(+). In terms of biological role, required for accurate and efficient protein synthesis under certain stress conditions. May act as a fidelity factor of the translation reaction, by catalyzing a one-codon backward translocation of tRNAs on improperly translocated ribosomes. Back-translocation proceeds from a post-translocation (POST) complex to a pre-translocation (PRE) complex, thus giving elongation factor G a second chance to translocate the tRNAs correctly. Binds to ribosomes in a GTP-dependent manner. The polypeptide is Elongation factor 4 (Cereibacter sphaeroides (strain ATCC 17023 / DSM 158 / JCM 6121 / CCUG 31486 / LMG 2827 / NBRC 12203 / NCIMB 8253 / ATH 2.4.1.) (Rhodobacter sphaeroides)).